The chain runs to 1734 residues: MRLLWGLAWVFSFCASSLQKPRLLLFSPSVVNLGTPLSVGVQLLDAPPGQEVKGSVFLRNPKGGSCSPKKDFKLSSGDDFVLLSLEVPLEDVRSCGLFDLRRAPYIQLVAQSPWLRNTAFKATETQGVNLLYSSRRGHIFVQTDQPIYNPGQRVRYRVFALDQKMRPSTDFLTITVENSHGLRVLKKEIFTSTSILQDTFTIPDISEPGTWKISARFSDGLESNRSTHFEVKKYVLPNFEVKITPWKPYILMVPSNSDEIQLDIQARYIYGKPVQGVAYTRFALMDEQGKRTFLRGLETQAKLVEGRTHISISKDQFQAALDKINIGVRDLEGLRLYAATAVIESPGGEMEEAELTSWRFVSSAFSLDLSRTKRHLVPGAHFLLQALVREISGSEASNVIVKVSPTLVSGSDSQVLNVQQSTNRIGQVSISFPIPPTVTGLRLLVSAGSLYPMIARLTVQSPPSRGTGFLSIEPLDPRSPRVGDTFILNLQAVGIPAPTFSHYYYMIISRGQIMAMSREARRTVTSVSVLVDHQLAPSFYFVAYFYHQGHPVANSLLINIQPRDCEGKLQLKVVGAKEYHNGDMMKLRIQTDSKALVALGAVDTALYAVGGWSHKPLDMSKVFEVINSYNVGCGPGGGDDAPQVFQDAGLAFSDGDRLTQTREDLSCPKEKKSRQKRNVNFLKALSEKLGQYSSPDAKRCCQDGMTKLPMKRTCEQRAARVPQQACREPFLSCCKFAEDLRRNQTRSQAPLARKVRDMVNLIEEDDILVRTSFPENWLWRVEPVDSSKLLTVRLPDSMTTWEIHGVSLSKSKGLCVAKPTRVRVFRKFHLHLRLPISVRRFEQLELRPVLYNYLNDDKNVSVHVTPVEGLCMAGGGMMAQWVIVPAGSALPVAFSVVPTASTNVPLKLVAKGTLDSSDSVSKILQIEKEGAIHREEIVYNLDPLNNLGQMLEIPGSSDPNIVPEGDFSTFVKVTASEPLETLGSEEALSPGGVASLLRLPGCAEQTMIYLAPTLTASNYLDRTKQWSKLSPETKDHAVHLIQKGHVRIQQFRKKDGSFGAWLHRDSSTWLTAFVLKILSLAQEQVGNSPEKLQETASWLLAQQLGDGSFHDPCPVIHRAMQGGLVGSNETVALTAFVVIALHHGLNVFREGHAKQLKNRVEASITKANSFLGQKASAGLLGAHAAAITAYALTLTKASEDLRNVAHNSLMAMAEETGENLYWGLVLGSQDKVVLRPADPRSPTEPVPQAPALWIETTAYALLHLLLREGKGKMADKAASWLTHQGNFHGAFRSTQDTVVTLDALSAYWIASHTTEEKALKVTLSSMGRNGLKTHVLHLNNHQVKGLEEELKFSLGSTISVKVEGNSKGTLKILRTYNVLDMKNTTCQDLQIEVKVTDAVEYAWSAYEDYEDDYNMPATDDPSVPLQPVTPLQLFEGRRSRRRREAPKVAEERESRVHYTVCIWRNGKLGLSGMAIADITLLSGFHALRADLEKLTSLSDRYVSHFETDGPHVLLYFDSVPTTRECVGFGASQEVVVGLVQPASAVLYDYYSPDHKCSVFYAAPTKSQLLATLCSGDVCQCAEGKCPRLLRSLERRVEDKDGYRMRFACYYHQVEYGFTVKVLREDGRAAFRFFESKITQVLHFRTDTMASIGQTRNFLSRTSCRLRLEPNKEYLIMGMDGETSDNKGDPQYLLDSNTWIEEMPSEQMCKSTRHRAACFQLKDFLMEFSSRGCQV.

Residues 1 to 19 form the signal peptide; it reads MRLLWGLAWVFSFCASSLQ. Cysteine 66 and cysteine 95 are disulfide-bonded. The N-linked (GlcNAc...) asparagine glycan is linked to asparagine 224. The cysteines at positions 633 and 667 are disulfide-linked. The propeptide occupies 674–677; the sequence is RQKR. Cystine bridges form between cysteine 700-cysteine 726, cysteine 701-cysteine 733, and cysteine 714-cysteine 734. Residues 700–734 form the Anaphylatoxin-like domain; the sequence is CCQDGMTKLPMKRTCEQRAARVPQQACREPFLSCC. N-linked (GlcNAc...) asparagine glycosylation is found at asparagine 743 and asparagine 859. The isoglutamyl cysteine thioester (Cys-Gln) cross-link spans 1002 to 1005; the sequence is CAEQ. Residues asparagine 1128 and asparagine 1383 are each glycosylated (N-linked (GlcNAc...) asparagine). Tyrosine 1409 carries the post-translational modification Sulfotyrosine. The propeptide occupies 1437–1443; the sequence is RRSRRRR. Disulfide bonds link cysteine 1461/cysteine 1525, cysteine 1573/cysteine 1578, cysteine 1585/cysteine 1663, cysteine 1608/cysteine 1732, and cysteine 1708/cysteine 1717. Residues 1585–1732 enclose the NTR domain; that stretch reads CPRLLRSLER…FLMEFSSRGC (148 aa).

In absence of complement activation, circulates in blood as a disulfide-linked trimer of an alpha, beta and gamma chain. In terms of assembly, complement C4b is composed of Complement C4b-A, Complement C4 beta and Complement C4 gamma chains that are associated via disulfide bonds. Non-enzymatic component of the C3 convertase, also named C4bC2b, composed of the serine protease complement C2b (C2), as well as complement C4b. Non-enzymatic component of the C5 convertase, also named C4bC2bC3b, composed of the serine protease complement C2b (C2), complement C3b, as well as complement C4b. Prior to secretion, the single-chain precursor is enzymatically cleaved by plasminogen (PLG) to yield non-identical chains alpha, beta and gamma. During activation of the complement systems, the alpha chain is cleaved into C4a and C4b by different proteases depending on the complement pathway: C4b stays linked to the beta and gamma chains, while C4a is released in the plasma. The alpha chain is cleaved by C1S to generate C4a and C4b following activation by the classical complement system. The alpha chain is cleaved to generate C4a and C4b by MASP2 following activation by the lectin complement system. The alpha chain is cleaved by GZMK to generate C4a and C4b following activation by the GZMK complement system. Further degradation of C4b by C1 into the inactive fragments C4c and C4d blocks the generation of C3 convertase. The proteolytic cleavages often are incomplete so that many structural forms can be found in plasma. In terms of processing, upon activation, the internal thioester bond reacts with carbohydrate antigens on the target surface to form amide or ester bonds, leading to covalent association with the surface of pathogens. Post-translationally, complement C4b interacts with complement C3b via a thioester linkage. N- and O-glycosylated. O-glycosylated with a core 1 or possibly core 8 glycan.

The protein localises to the secreted. It is found in the synapse. The protein resides in the cell projection. Its subcellular location is the axon. It localises to the dendrite. The protein localises to the cell surface. Specifically inhibited by nanobody hC4Nb8, inhibiting the classical complement pathway. Its function is as follows. Precursor of non-enzymatic components of the classical, lectin and GZMK complement pathways, which consist in a cascade of proteins that leads to phagocytosis and breakdown of pathogens and signaling that strengthens the adaptive immune system. Functionally, non-enzymatic component of C3 and C5 convertases. Generated following cleavage by complement proteases (C1S, MASP2 or GZMK, depending on the complement pathway), it covalently attaches to the surface of pathogens, where it acts as an opsonin that marks the surface of antigens for removal. It then recruits the serine protease complement C2b to form the C3 and C5 convertases, which cleave and activate C3 and C5, respectively, the next components of the complement pathways. Complement C4b-A isotype is responsible for effective binding to form amide bonds with immune aggregates or protein antigens, while complement C4b-B isotype catalyzes the transacylation of the thioester carbonyl group to form ester bonds with carbohydrate antigens. In terms of biological role, putative humoral mediator released following cleavage by complement proteases (C1S, MASP2 or GZMK, depending on the complement pathway). While it is strongly similar to anaphylatoxins, its role is unclear. Was reported to act as a mediator of local inflammatory process; however these effects were probably due to contamination with C3a and/C5a anaphylatoxins in biological assays. This chain is Complement C4-A, found in Mus musculus (Mouse).